The following is a 432-amino-acid chain: Putative D-alanyl-D-alanine carboxypeptidase (432 aa).

The helical; Signal-anchor transmembrane segment at Ala-7–Leu-25 threads the bilayer.

The protein belongs to the peptidase S12 family. YfeW subfamily.

The protein localises to the cell inner membrane. It carries out the reaction Preferential cleavage: (Ac)2-L-Lys-D-Ala-|-D-Ala. Also transpeptidation of peptidyl-alanyl moieties that are N-acyl substituents of D-alanine.. The chain is Putative D-alanyl-D-alanine carboxypeptidase from Salmonella paratyphi A (strain ATCC 9150 / SARB42).